Reading from the N-terminus, the 113-residue chain is Endoribonuclease SymE (113 aa).

One can recognise a SpoVT-AbrB domain in the interval 29-74; it reads SRYPDYSRIPAITLKGQWLEAAGFATGTAVDVKVMEGCIVLTAQPA.

This sequence belongs to the SymE family.

It is found in the cytoplasm. Involved in the degradation and recycling of damaged RNA. It is itself a target for degradation by the ATP-dependent protease Lon. The sequence is that of Endoribonuclease SymE from Shigella flexneri serotype 5b (strain 8401).